We begin with the raw amino-acid sequence, 382 residues long: MPDSLPSDSVGLVSPKTIHFDKPLELACGQSLESYDLVVETYGKLNADASNAVLICHALSGHHHAAGYHSLDDRKPGWWDSCIGPGKPIDTNRFFVVSLNNLGGCHGSTGPNSNNPETGKPYGPDFPVVTVADWVASQARLADHLGIQQWAAVVGGSLGGMQALQWSLDYPDRLRHSVVIASTPRLTAQNIAFNEVARQAITSDREFFEGRYYDENLVPKRGLMLARMVGHITYLSDASMGEKFGRELREEAYKFGFDAEFQVESYLRYQGERFSETFDANTYLLMTRALDYFDPAYDFGGDLSKALAPAQCEYLVLSFSTDWRFSPARSEEMVNAMISARKRVSYAEIDAPWGHDAFLIPTPRYTDIFTAYMDRVAREVGA.

One can recognise an AB hydrolase-1 domain in the interval Asn-51 to Leu-359. Ser-157 acts as the Nucleophile in catalysis. A substrate-binding site is contributed by Arg-227. Catalysis depends on residues Asp-322 and His-355. Asp-356 provides a ligand contact to substrate.

This sequence belongs to the AB hydrolase superfamily. MetX family. Homodimer.

The protein localises to the cytoplasm. The enzyme catalyses L-homoserine + succinyl-CoA = O-succinyl-L-homoserine + CoA. The protein operates within amino-acid biosynthesis; L-methionine biosynthesis via de novo pathway; O-succinyl-L-homoserine from L-homoserine: step 1/1. In terms of biological role, transfers a succinyl group from succinyl-CoA to L-homoserine, forming succinyl-L-homoserine. The chain is Homoserine O-succinyltransferase from Marinobacter nauticus (strain ATCC 700491 / DSM 11845 / VT8) (Marinobacter aquaeolei).